A 717-amino-acid chain; its full sequence is MGLLSEGSPLSWEETKALADHVREHGVNQFINLYHRLKDRQGDILKWGDEVEYIIVKFDDEQKVARVALRAQDLLAQLNEKELADPNGVKSLWRPEYGAYMIEGTPGKPFGGLMAHFNLVEANMRYRREEVTELLAKDECVMSITNFPRLGAPNFTYPLAQPRPEDPLSSARSLYFPDEAIFPGHPRFKTLTRNIRKRRGEKVSIKLKVFKDTKTKLPVEGAPPGEPDVVLLDAMGFGMGCCCLQLTFQACNITEARRLYDQLAPLCPIMLALTAASPIYRGYLTESDCRWNVISSSVDCRTEEERGLAPLDQQKFRIAKSRYDSIDSYLSPEGAKYNDVPLTYDEKVYQRLVEGGIDHLLAQHVAHLFIRDTVSLFSEKVHQNDNEDTDHFENIQSTNWQTMRFKPPPPNSSIGWRVEFRPCEAQISDFENAAIVCFVVLLTRVILSYQLNFLTPISKVDENMQTAQKRDACRKEKFWFRKSSKTTEQRAAKAQAQAQAQAKAQAQTNGKATLNGNGLANGNGNGSENSDQEEQQPLTNGSAKMNGHGSGTTNGTNGSSNGSSNGTDSDHTDTDDEENELFQLLSINEIFNGKPNVFPGLVPLIRSYLQSMEVDTDTHCTIEQYLRFIQKRAAGELITTATWMREQVLSHPDYKQDSVVSERINYDLLKRIQGIQEGKQVEPALLGQDYHSKTKTKDFIPPALQKQLAKNGCCEEK.

The segment at 484 to 576 (SKTTEQRAAK…TDSDHTDTDD (93 aa)) is disordered. Low complexity-rich tracts occupy residues 492–518 (AKAQ…NGNG) and 551–567 (GTTN…SNGT).

This sequence belongs to the glutamate--cysteine ligase type 3 family.

The catalysed reaction is L-cysteine + L-glutamate + ATP = gamma-L-glutamyl-L-cysteine + ADP + phosphate + H(+). It catalyses the reaction (2S)-2-aminobutanoate + L-glutamate + ATP = gamma-L-glutamyl-(2S)-2-aminobutanoate + ADP + phosphate + H(+). Its pathway is sulfur metabolism; glutathione biosynthesis; glutathione from L-cysteine and L-glutamate: step 1/2. Its function is as follows. Catalyzes the ATP-dependent ligation of L-glutamate and L-cysteine and participates in the first and rate-limiting step in glutathione biosynthesis. This chain is Glutamate--cysteine ligase, found in Drosophila melanogaster (Fruit fly).